A 127-amino-acid polypeptide reads, in one-letter code: Large ribosomal subunit protein bL17 (127 aa).

Belongs to the bacterial ribosomal protein bL17 family. As to quaternary structure, part of the 50S ribosomal subunit. Contacts protein L32.

The polypeptide is Large ribosomal subunit protein bL17 (Leuconostoc citreum (strain KM20)).